The chain runs to 271 residues: 3-methyl-2-oxobutanoate hydroxymethyltransferase (271 aa).

Mg(2+) is bound by residues Asp51 and Asp90. Residues 51-52 (DS), Asp90, and Lys119 each bind 3-methyl-2-oxobutanoate. Glu121 serves as a coordination point for Mg(2+). Glu188 functions as the Proton acceptor in the catalytic mechanism.

Belongs to the PanB family. In terms of assembly, homodecamer; pentamer of dimers. It depends on Mg(2+) as a cofactor.

It is found in the cytoplasm. The catalysed reaction is 3-methyl-2-oxobutanoate + (6R)-5,10-methylene-5,6,7,8-tetrahydrofolate + H2O = 2-dehydropantoate + (6S)-5,6,7,8-tetrahydrofolate. It functions in the pathway cofactor biosynthesis; (R)-pantothenate biosynthesis; (R)-pantoate from 3-methyl-2-oxobutanoate: step 1/2. In terms of biological role, catalyzes the reversible reaction in which hydroxymethyl group from 5,10-methylenetetrahydrofolate is transferred onto alpha-ketoisovalerate to form ketopantoate. This Azoarcus sp. (strain BH72) protein is 3-methyl-2-oxobutanoate hydroxymethyltransferase.